Here is a 215-residue protein sequence, read N- to C-terminus: Pyridoxine/pyridoxamine 5'-phosphate oxidase (215 aa).

Residues R9 to Y12 and K67 contribute to the substrate site. Residues R62–K67, Y77–T78, K84, and Q106 each bind FMN. The substrate site is built by Y124, R128, and S132. FMN contacts are provided by residues Q141 to S142 and W187. R193–H195 provides a ligand contact to substrate. R197 serves as a coordination point for FMN.

This sequence belongs to the pyridoxamine 5'-phosphate oxidase family. As to quaternary structure, homodimer. It depends on FMN as a cofactor.

It catalyses the reaction pyridoxamine 5'-phosphate + O2 + H2O = pyridoxal 5'-phosphate + H2O2 + NH4(+). It carries out the reaction pyridoxine 5'-phosphate + O2 = pyridoxal 5'-phosphate + H2O2. It participates in cofactor metabolism; pyridoxal 5'-phosphate salvage; pyridoxal 5'-phosphate from pyridoxamine 5'-phosphate: step 1/1. Its pathway is cofactor metabolism; pyridoxal 5'-phosphate salvage; pyridoxal 5'-phosphate from pyridoxine 5'-phosphate: step 1/1. In terms of biological role, catalyzes the oxidation of either pyridoxine 5'-phosphate (PNP) or pyridoxamine 5'-phosphate (PMP) into pyridoxal 5'-phosphate (PLP). This chain is Pyridoxine/pyridoxamine 5'-phosphate oxidase, found in Cytophaga hutchinsonii (strain ATCC 33406 / DSM 1761 / CIP 103989 / NBRC 15051 / NCIMB 9469 / D465).